The following is a 106-amino-acid chain: Small ribosomal subunit protein uS10 (106 aa).

This sequence belongs to the universal ribosomal protein uS10 family. In terms of assembly, part of the 30S ribosomal subunit.

Involved in the binding of tRNA to the ribosomes. This chain is Small ribosomal subunit protein uS10, found in Prochlorococcus marinus (strain MIT 9211).